We begin with the raw amino-acid sequence, 185 residues long: MSNLFIGELVSLSIMAFALGTDAFSVGLGMGMIQLKKKQIFHIGVVIGLFHVMMPLAGMAAGHLLSGFLGMLAVYIGGSLLFILGVQMIIAAFKQSDGPLISPAGSGLLLFAIGVSLDSFSVGLSLGMNGSNPFLAVTLFGVFSTVLTWAGLLAGRKVQSWLGSYSEALGGAILIGFGLKLLLPV.

A run of 6 helical transmembrane segments spans residues 4–24 (LFIG…TDAF), 40–60 (IFHI…AGMA), 64–84 (LLSG…LFIL), 108–128 (LLLF…SLGM), 134–154 (FLAV…GLLA), and 165–185 (YSEA…LLPV).

Belongs to the MntP (TC 9.B.29) family.

Its subcellular location is the cell membrane. Probably functions as a manganese efflux pump. The protein is Putative manganese efflux pump MntP of Bacillus velezensis (strain DSM 23117 / BGSC 10A6 / LMG 26770 / FZB42) (Bacillus amyloliquefaciens subsp. plantarum).